A 638-amino-acid chain; its full sequence is Ubiquitin-associated and SH3 domain-containing protein B (638 aa).

Ser9 bears the Phosphoserine mark. Thr12 is subject to Phosphothreonine. The region spanning 23 to 65 is the UBA domain; it reads TVKHGSALDVLLSMGFPRARAQKALASTGGRSVQAACDWLFSH. In terms of domain architecture, SH3 spans 243 to 308; the sequence is ANHETLQVIY…PENYITKADE (66 aa). The tract at residues 369 to 638 is protein tyrosine phosphatase; it reads GPQKRCLFVC…FNWRETLLQE (270 aa). Arg379 is an active-site residue. His380 (tele-phosphohistidine intermediate) is an active-site residue. The active site involves His565.

As to quaternary structure, homodimer. Interacts with JAK2 (in vitro). Interacts with CBL. Part of a complex containing CBL and activated EGFR. Interacts with ubiquitin and with mono-ubiquitinated proteins. Interacts with ZAP70 (ubiquitinated form). Detected in splenic T-cells and B-cells, total spleen, skeletal muscle, heart, lung, kidney, thymus, brain and liver (at protein level). Highly expressed in brain. Detected in heart, spleen, lung, liver, kidney and testis.

It localises to the cytoplasm. Its subcellular location is the nucleus. The catalysed reaction is O-phospho-L-tyrosyl-[protein] + H2O = L-tyrosyl-[protein] + phosphate. Functionally, interferes with CBL-mediated down-regulation and degradation of receptor-type tyrosine kinases. Promotes accumulation of activated target receptors, such as T-cell receptors and EGFR, on the cell surface. Exhibits tyrosine phosphatase activity toward several substrates including EGFR, FAK, SYK, and ZAP70. Down-regulates proteins that are dually modified by both protein tyrosine phosphorylation and ubiquitination. This Mus musculus (Mouse) protein is Ubiquitin-associated and SH3 domain-containing protein B (Ubash3b).